The primary structure comprises 115 residues: MDKRSLYDGLNSLETDLDSSVTQLREIKAALHELVEKNTTLEIENQRLREHLQELNKLAGNTTETEKQELSKSRMNLEKLYEEGFHVCNILYGSRRENDEECAFCLDVIYGERTR.

Zn(2+)-binding residues include histidine 86, cysteine 88, cysteine 102, and cysteine 105.

It belongs to the YabA family. Homotetramer. Interacts with both DnaA and DnaN, acting as a bridge between these two proteins. Zn(2+) serves as cofactor.

Its subcellular location is the cytoplasm. The protein localises to the nucleoid. In terms of biological role, involved in control of chromosome replication initiation. Inhibits the cooperative binding of DnaA to the oriC region, thus negatively regulating initiation of chromosome replication. Inhibits the ability of DnaA-ATP to form a helix on DNA; does not disassemble preformed DnaA-DNA helices. Decreases the residence time of DnaA on the chromosome at its binding sites (oriC, replication forks and promoter-binding sites). Tethers DnaA to the replication machinery via the DNA polymerase beta sliding clamp subunit (dnaN). Associates with oriC and other DnaA targets on the chromosome in a DnaA-dependent manner. The sequence is that of Replication initiation control protein YabA from Enterococcus faecalis (strain ATCC 700802 / V583).